A 686-amino-acid chain; its full sequence is DNA ligase (686 aa).

NAD(+) contacts are provided by residues 31–35 (DSEYD), 80–81 (SL), and Glu-109. Lys-111 functions as the N6-AMP-lysine intermediate in the catalytic mechanism. NAD(+) is bound by residues Arg-132, Glu-166, Lys-280, and Lys-304. Residues Cys-430, Cys-433, Cys-448, and Cys-453 each contribute to the Zn(2+) site. Positions 611–686 (NVEGILSGKT…IWSEQDLLDL (76 aa)) constitute a BRCT domain.

This sequence belongs to the NAD-dependent DNA ligase family. LigA subfamily. It depends on Mg(2+) as a cofactor. Mn(2+) serves as cofactor.

The catalysed reaction is NAD(+) + (deoxyribonucleotide)n-3'-hydroxyl + 5'-phospho-(deoxyribonucleotide)m = (deoxyribonucleotide)n+m + AMP + beta-nicotinamide D-nucleotide.. DNA ligase that catalyzes the formation of phosphodiester linkages between 5'-phosphoryl and 3'-hydroxyl groups in double-stranded DNA using NAD as a coenzyme and as the energy source for the reaction. It is essential for DNA replication and repair of damaged DNA. This chain is DNA ligase, found in Lactococcus lactis subsp. cremoris (strain SK11).